Reading from the N-terminus, the 861-residue chain is Leucine--tRNA ligase (861 aa).

The short motif at 42–52 is the 'HIGH' region element; sequence PYPSGKLHMGH. Residues 618 to 622 carry the 'KMSKS' region motif; it reads KMSKS. Lys-621 provides a ligand contact to ATP.

The protein belongs to the class-I aminoacyl-tRNA synthetase family.

It is found in the cytoplasm. The catalysed reaction is tRNA(Leu) + L-leucine + ATP = L-leucyl-tRNA(Leu) + AMP + diphosphate. The chain is Leucine--tRNA ligase from Buchnera aphidicola subsp. Baizongia pistaciae (strain Bp).